A 311-amino-acid polypeptide reads, in one-letter code: T-cell immunomodulatory protein (311 aa).

3 N-linked (GlcNAc...) asparagine glycosylation sites follow: Asn-52, Asn-70, and Asn-181. A helical membrane pass occupies residues 266 to 286; the sequence is VLLTAIALIGVCVFILAIIGI.

This sequence belongs to the TIP family. In terms of assembly, interacts with RUVBL1, RUVBL2 and alpha-tubulin.

It localises to the secreted. The protein resides in the cell membrane. Functionally, modulator of T-cell function. Has a protective effect in graft versus host disease model. This chain is T-cell immunomodulatory protein, found in Macaca fascicularis (Crab-eating macaque).